Reading from the N-terminus, the 322-residue chain is Malate dehydrogenase (322 aa).

Residues 10-15 and aspartate 34 contribute to the NAD(+) site; that span reads GSGMIG. Substrate-binding residues include arginine 83 and arginine 89. NAD(+) contacts are provided by residues asparagine 96 and 119-121; that span reads ITN. Substrate is bound by residues asparagine 121 and arginine 152. Histidine 176 functions as the Proton acceptor in the catalytic mechanism.

This sequence belongs to the LDH/MDH superfamily. MDH type 3 family.

The enzyme catalyses (S)-malate + NAD(+) = oxaloacetate + NADH + H(+). Its function is as follows. Catalyzes the reversible oxidation of malate to oxaloacetate. In Mesorhizobium japonicum (strain LMG 29417 / CECT 9101 / MAFF 303099) (Mesorhizobium loti (strain MAFF 303099)), this protein is Malate dehydrogenase.